The chain runs to 402 residues: Subtilisin-like protease 9 (402 aa).

Positions 1–20 (MGFFRQLFSLSLCALSLAIP) are cleaved as a signal peptide. Positions 21 to 120 (SKLIGLENTQ…VEVDRVVKLD (100 aa)) are excised as a propeptide. One can recognise an Inhibitor I9 domain in the interval 36–119 (SYIVVMKSTI…YVEVDRVVKL (84 aa)). Positions 130–402 (SWGLGRISHK…RKLLYNGSGA (273 aa)) constitute a Peptidase S8 domain. Active-site charge relay system residues include D162 and H193. N254 is a glycosylation site (N-linked (GlcNAc...) asparagine). The Charge relay system role is filled by S348. N390 and N398 each carry an N-linked (GlcNAc...) asparagine glycan.

It belongs to the peptidase S8 family.

The protein resides in the secreted. Secreted subtilisin-like serine protease with keratinolytic activity that contributes to pathogenicity. The chain is Subtilisin-like protease 9 (SUB9) from Arthroderma benhamiae (strain ATCC MYA-4681 / CBS 112371) (Trichophyton mentagrophytes).